We begin with the raw amino-acid sequence, 348 residues long: Protein RecA (348 aa).

ATP is bound at residue 68-75 (GPESSGKT).

It belongs to the RecA family.

The protein localises to the cytoplasm. Its function is as follows. Can catalyze the hydrolysis of ATP in the presence of single-stranded DNA, the ATP-dependent uptake of single-stranded DNA by duplex DNA, and the ATP-dependent hybridization of homologous single-stranded DNAs. It interacts with LexA causing its activation and leading to its autocatalytic cleavage. The sequence is that of Protein RecA from Rhodococcus opacus (strain B4).